Reading from the N-terminus, the 64-residue chain is Conotoxin reg3.16 (64 aa).

An N-terminal signal peptide occupies residues 1-19; the sequence is MSKLGVFLTICLLLFPLTA. A propeptide spanning residues 20–49 is cleaved from the precursor; the sequence is LQLDGDQPADKPAQRKLKILPKRKHWTRFT. Intrachain disulfides connect Cys50/Cys64, Cys51/Cys60, and Cys56/Cys63.

It belongs to the conotoxin M superfamily. As to expression, expressed by the venom duct.

The protein resides in the secreted. The protein is Conotoxin reg3.16 of Conus regius (Crown cone).